A 113-amino-acid chain; its full sequence is Putative pterin-4-alpha-carbinolamine dehydratase (113 aa).

Belongs to the pterin-4-alpha-carbinolamine dehydratase family.

It carries out the reaction (4aS,6R)-4a-hydroxy-L-erythro-5,6,7,8-tetrahydrobiopterin = (6R)-L-erythro-6,7-dihydrobiopterin + H2O. The chain is Putative pterin-4-alpha-carbinolamine dehydratase from Pelodictyon phaeoclathratiforme (strain DSM 5477 / BU-1).